Here is a 357-residue protein sequence, read N- to C-terminus: Probable cinnamyl alcohol dehydrogenase (357 aa).

Position 47 (C47) interacts with Zn(2+). S49 is an NADP(+) binding site. Zn(2+) contacts are provided by H69, E70, C100, C103, C106, C114, and C163. NADP(+) is bound by residues T167, 188 to 193, 211 to 216, T251, G275, and 298 to 300; these read GLGGVG, SSSDKK, and SFI.

This sequence belongs to the zinc-containing alcohol dehydrogenase family. Homodimer. It depends on Zn(2+) as a cofactor.

The enzyme catalyses (E)-cinnamyl alcohol + NADP(+) = (E)-cinnamaldehyde + NADPH + H(+). It catalyses the reaction (E)-coniferol + NADP(+) = (E)-coniferaldehyde + NADPH + H(+). The catalysed reaction is (E)-sinapyl alcohol + NADP(+) = (E)-sinapaldehyde + NADPH + H(+). It carries out the reaction (E)-4-coumaroyl alcohol + NADP(+) = (E)-4-coumaraldehyde + NADPH + H(+). The enzyme catalyses (E)-caffeyl alcohol + NADP(+) = (E)-caffeyl aldehyde + NADPH + H(+). The protein operates within aromatic compound metabolism; phenylpropanoid biosynthesis. Its function is as follows. Involved in lignin biosynthesis. Catalyzes the final step specific for the production of lignin monomers. Catalyzes the NADPH-dependent reduction of coniferaldehyde, 5-hydroxyconiferaldehyde, sinapaldehyde, 4-coumaraldehyde and caffeyl aldehyde to their respective alcohols. This is Probable cinnamyl alcohol dehydrogenase from Pinus taeda (Loblolly pine).